The primary structure comprises 321 residues: Probable protein phosphatase methylesterase 1 (321 aa).

Residues Ser-170, Asp-195, and His-307 contribute to the active site.

It belongs to the AB hydrolase superfamily.

It carries out the reaction [phosphatase 2A protein]-C-terminal L-leucine methyl ester + H2O = [phosphatase 2A protein]-C-terminal L-leucine + methanol + H(+). Demethylates proteins that have been reversibly carboxymethylated. This chain is Probable protein phosphatase methylesterase 1 (ppme1), found in Dictyostelium discoideum (Social amoeba).